A 752-amino-acid chain; its full sequence is MFSGKQTKPTFKSYLPPLQTDLKKSPQLPIKKLEAKLLPGEIVVNEANFVRKCIGADSGQDDLWGKLVCTNFKVSFISHNSLPQQRFQCTHRLLGEHDIPLACVEQVVTVNDVKGKQKILGSNQKLKFNPTELILYCKDFRIIRFRFDEAGPESAKKVCLAIAHYSHPADPQLLFGFEYVGKRYHGSAGERVNGVDPGGGLQTPLFDCSSDWDREIKRTGASEWRVCTINQGYFISPSLPEFFVVPVSLADQDLKQYACCFYSQRIPLWCWNHPSGSALVRMSNISDPQQQRKVEQRISSAITKSHPLRSDVFKSDLDKNLPNIQDIQAALLKLRQICVIESFEESEEKWLSSLESSRWMEYVRTFLRHAVEVVYMLESRHVSVILLEKEDRDLSCVISSLVQLMCDPHCRSLHGFQALIQKEWVMAGHRFLDRCNHLKKSDKEELWNQYPAAFEFTEVYLTVLGDSMWVPVFSTFLFNCPRQRAEHSRDFASSKSIHLGQDQALRFPPVWDWSQQFSLKDQTLFNNPLYVGKIATCLQNGTVKTFTHRRSKKNYSSTVRGLPSLMRNGSLGPNDTLTRRNSLVLRLRSDLSQVREQPETPSERFVRDFFSRAVDLQGLLLPQLLPSHLSVWKLYFLRWVPEAQIPHGGPVTAFHKLSVLTDEIEMLQNQLRQYKGAAGTANTSHAEHSKMYFKATSTPQQCPAPPGYLSSSFPFSPVGNLCRPGILGTPLSKFLNGAKIWLSTETLANETI.

The Myotubularin phosphatase domain occupies 206-636 (FDCSSDWDRE…SHLSVWKLYF (431 aa)). A coiled-coil region spans residues 652-683 (TAFHKLSVLTDEIEMLQNQLRQYKGAAGTANT).

It belongs to the protein-tyrosine phosphatase family. Non-receptor class myotubularin subfamily.

The polypeptide is Myotubularin-related protein 10 (mtmr10) (Danio rerio (Zebrafish)).